The following is a 3177-amino-acid chain: Proliferation marker protein Ki-67 (3177 aa).

The 50-residue stretch at 27–76 (CLFGRSIECDIRIQLPVVSKRHCKIEVKEQEAILYNFSSTNPTQVNGVTI) folds into the FHA domain. 2 stretches are compositionally biased toward basic and acidic residues: residues 98–107 (EDGNHEDGSK) and 116–126 (LGKEPSRRASR). Disordered regions lie at residues 98 to 442 (EDGN…PGLS) and 473 to 572 (RPEL…ASIS). Phosphoserine is present on residues Ser-125, Ser-128, and Ser-162. 2 stretches are compositionally biased toward polar residues: residues 165-177 (SDGSKNSVSQDSS) and 202-221 (STGSSYREPKSSPTQSLSNS). Residues 235-263 (MKEELDVKSQKSCRKSEPQPDRAAEESRE) are compositionally biased toward basic and acidic residues. Lys-236 participates in a covalent cross-link: Glycyl lysine isopeptide (Lys-Gly) (interchain with G-Cter in SUMO2). Phosphoserine is present on residues Ser-250, Ser-276, Ser-277, Ser-286, and Ser-287. Positions 276–286 (SSGSTPVTAAS) are enriched in polar residues. A phosphothreonine mark is found at Thr-307 and Thr-316. Phosphoserine occurs at positions 321, 337, 373, 498, 503, and 588. The segment at 455–618 (KSEGMPMKRR…VKQTQTKVAK (164 aa)) is positively charged patch (CP). The PP1-binding domain maps to 462 to 509 (KRRRVSFGGHLRPELFDENLPPNTPLKRGETPTKRKSLGTHSPAVLKT). The tract at residues 614 to 652 (TKVAKHVPQKQTSKRQRRPSTPKKPTSNLHNQFTTGHAN) is disordered. Residues 616 to 634 (VAKHVPQKQTSKRQRRPST) show a composition bias toward basic residues. The span at 636 to 652 (KKPTSNLHNQFTTGHAN) shows a compositional bias: polar residues. Phosphothreonine is present on Thr-701. 3 disordered regions span residues 793–815 (LEKKTPVSETEPLKTASSVSKLR), 835–901 (VLAE…LGSQ), and 956–989 (KHSPKTPGKKAQPLEGPAGLKEHFETPNPKDKPI). Residues 855-864 (DQQVQDNENA) are compositionally biased toward polar residues. Basic and acidic residues-rich tracts occupy residues 867–882 (RCKESGELSEGSEKTS) and 975–989 (LKEHFETPNPKDKPI). 16 K167R repeats span residues 994–1101 (TRVL…FISP), 1108–1216 (KKIP…FQTP), 1228–1336 (SAKI…FQTP), 1348–1450 (SAKM…FQIP), 1461–1569 (KTKK…FQMP), 1582–1684 (TMLA…LFQT), 1696–1806 (KQTR…FQTP), 1817–1925 (ETTK…FQTP), 1937–2046 (SAKI…FQTP), 2059–2163 (VKMS…FQTP), 2175–2284 (SAKM…FQTP), 2296–2405 (SAKI…VFQT), 2419–2526 (AKLP…CQAP), 2537–2639 (KTPK…SFQE), 2643–2748 (KRIS…PIQT), and 2762–2870 (TQMP…ITQI). Glycyl lysine isopeptide (Lys-Gly) (interchain with G-Cter in SUMO2) cross-links involve residues Lys-1013 and Lys-1026. The residue at position 1062 (Ser-1062) is a Phosphoserine. A Glycyl lysine isopeptide (Lys-Gly) (interchain with G-Cter in SUMO1); alternate cross-link involves residue Lys-1082. A Glycyl lysine isopeptide (Lys-Gly) (interchain with G-Cter in SUMO2); alternate cross-link involves residue Lys-1082. 2 disordered regions span residues 1109 to 1321 (KIPS…IRAQ) and 1334 to 1410 (QTPA…ENDC). Position 1114 is a phosphoserine (Ser-1114). The segment covering 1114–1127 (SPHTQPVRTPASTK) has biased composition (polar residues). Thr-1122 is subject to Phosphothreonine. Ser-1125 carries the post-translational modification Phosphoserine. At Thr-1150 the chain carries Phosphothreonine. Ser-1152 is modified (phosphoserine). Phosphothreonine is present on residues Thr-1159 and Thr-1175. Ser-1189 carries the post-translational modification Phosphoserine. Thr-1215 is modified (phosphothreonine). Residue Ser-1235 is modified to Phosphoserine. Phosphothreonine is present on residues Thr-1243, Thr-1279, Thr-1295, Thr-1307, and Thr-1315. Basic residues predominate over residues 1308-1317 (GHKRRPRTPK). Lys-1317 participates in a covalent cross-link: Glycyl lysine isopeptide (Lys-Gly) (interchain with G-Cter in SUMO2). At Thr-1335 the chain carries Phosphothreonine. A compositionally biased stretch (polar residues) spans 1353–1368 (LESSQAEPVKTPASTK). Ser-1356 carries the post-translational modification Phosphoserine. Thr-1363 carries the phosphothreonine modification. Ser-1366 is subject to Phosphoserine. The segment covering 1371–1384 (SKTDLSKVDVREDP) has biased composition (basic and acidic residues). A phosphothreonine mark is found at Thr-1400 and Thr-1416. Ser-1469 carries the post-translational modification Phosphoserine. Thr-1477 bears the Phosphothreonine mark. A Phosphoserine modification is found at Ser-1480. Thr-1513 is modified (phosphothreonine). The segment at 1526–1550 (RKPAKRKLDSTAGMPNSKRMRCSSK) is disordered. 2 positions are modified to phosphoserine: Ser-1542 and Ser-1587. Residue Lys-1609 is modified to N6-acetyllysine. Residue Lys-1668 forms a Glycyl lysine isopeptide (Lys-Gly) (interchain with G-Cter in SUMO2) linkage. Thr-1684 and Thr-1712 each carry phosphothreonine. Position 1734 is a phosphoserine (Ser-1734). The tract at residues 1749-1797 (IPIGPEDDTENKGVKESTPQTLDSSASRTVSKRQQGAHEERPQFSGDLF) is disordered. Over residues 1765–1782 (STPQTLDSSASRTVSKRQ) the composition is skewed to polar residues. Phosphothreonine is present on Thr-1766. Ser-1779 bears the Phosphoserine mark. Position 1805 is a phosphothreonine (Thr-1805). Ser-1825 bears the Phosphoserine mark. Phosphothreonine occurs at positions 1859, 1868, 1884, and 1924. A disordered region spans residues 1925–2033 (PAGASDPVSV…QTPKIRAQPL (109 aa)). A Phosphoserine modification is found at Ser-1944. Lys-1966 carries the post-translational modification N6-acetyllysine. Phosphothreonine is present on residues Thr-1989, Thr-2005, and Thr-2025. Lys-2027 is covalently cross-linked (Glycyl lysine isopeptide (Lys-Gly) (interchain with G-Cter in SUMO1); alternate). Lys-2027 is covalently cross-linked (Glycyl lysine isopeptide (Lys-Gly) (interchain with G-Cter in SUMO2); alternate). Position 2045 is a phosphothreonine (Thr-2045). The tract at residues 2047–2112 (AGANDSVTVE…SPGTPAPVQE (66 aa)) is disordered. Positions 2063–2078 (LESSQAEPVKTPASTK) are enriched in polar residues. Ser-2065 carries the phosphoserine modification. Thr-2073 carries the post-translational modification Phosphothreonine. Phosphoserine is present on residues Ser-2076, Ser-2095, and Ser-2103. Residues 2088–2101 (VDVREDPSILEKKT) are compositionally biased toward basic and acidic residues. Residues Thr-2106 and Thr-2122 each carry the phosphothreonine modification. A disordered region spans residues 2124 to 2343 (KQKLDFTGNS…PLSKSSCASQ (220 aa)). Basic residues predominate over residues 2135–2144 (GHKRRPRTPK). Thr-2162 bears the Phosphothreonine mark. Over residues 2180–2195 (LESSQAKPVKTPASTK) the composition is skewed to polar residues. The residue at position 2182 (Ser-2182) is a Phosphoserine. Thr-2190 is subject to Phosphothreonine. Ser-2198 is modified (phosphoserine). Thr-2218 is subject to Phosphothreonine. Ser-2220 carries the post-translational modification Phosphoserine. Phosphothreonine is present on residues Thr-2227, Thr-2243, and Thr-2283. Phosphoserine is present on Ser-2303. Phosphothreonine occurs at positions 2311 and 2348. The span at 2378 to 2390 (RGKRQQRSCKKRS) shows a compositional bias: basic residues. Positions 2378 to 2447 (RGKRQQRSCK…RRQARTGLRK (70 aa)) are disordered. Residues Ser-2390 and Ser-2392 each carry the phosphoserine modification. The residue at position 2405 (Thr-2405) is a Phosphothreonine. Residues Ser-2423 and Ser-2425 each carry the phosphoserine modification. A Glycyl lysine isopeptide (Lys-Gly) (interchain with G-Cter in SUMO1) cross-link involves residue Lys-2451. Phosphoserine occurs at positions 2464, 2487, 2545, and 2592. Positions 2538–2547 (TPKMPDKSPE) are enriched in basic and acidic residues. 2 disordered regions span residues 2538–2828 (TPKM…QVSK) and 2879–3160 (HDTS…DAKT). The segment covering 2605–2622 (VQKQDPSVSLTGRRNQPR) has biased composition (polar residues). A Phosphoserine modification is found at Ser-2649. Composition is skewed to basic and acidic residues over residues 2673–2697 (GVKEEPTAQRKQPSRETRNTLKEPV) and 2704–2714 (EEVKKSTKQKI). Lys-2675 is covalently cross-linked (Glycyl lysine isopeptide (Lys-Gly) (interchain with G-Cter in SUMO1); alternate). Lys-2675 participates in a covalent cross-link: Glycyl lysine isopeptide (Lys-Gly) (interchain with G-Cter in SUMO2); alternate. Composition is skewed to polar residues over residues 2764–2781 (MPCNSLQPEQVDSFQSSP) and 2883–2892 (ILKSTQQQKP). 2 positions are modified to phosphoserine: Ser-2768 and Ser-2780. Basic and acidic residues predominate over residues 2907 to 2923 (ASKEDPKEVLVDTRDHA). A Glycyl lysine isopeptide (Lys-Gly) (interchain with G-Cter in SUMO2) cross-link involves residue Lys-2909. Lys-2928 bears the N6-acetyllysine mark. A compositionally biased stretch (basic and acidic residues) spans 2959-2971 (EATDEKPVPEKKR). 2973 to 2980 (ASSKRHVS) lines the ATP pocket. A Phosphoserine modification is found at Ser-2980. A compositionally biased stretch (basic and acidic residues) spans 3008–3018 (KTEEMEAKREN). A Phosphothreonine modification is found at Thr-3021. Basic and acidic residues predominate over residues 3039-3057 (PKFDASAENVGIKKNEKTM). A compositionally biased stretch (polar residues) spans 3058–3067 (KTASQETELQ). Phosphoserine is present on Ser-3061. 2 stretches are compositionally biased toward basic and acidic residues: residues 3118–3132 (PQEEKGVSGESDVRC) and 3140–3160 (VALDSEPKPRVTRGTKKDAKT).

Interacts with KIF15. Interacts (via the FHA domain) with NIFK. Interacts with PPP1CC. Component of a complex at least composed of ZNF335, HCFC1, CCAR2, EMSY, MKI67, RBBP5, ASH2L and WDR5; the complex is formed as a result of interactions between components of a nuclear receptor-mediated transcription complex and a histone methylation complex. Interacts with ZNF335. Hyperphosphorylated by CDK1 in mitosis; hyperphosphorylatiom prevents undergoing liquid-liquid phase separation. Dephosphorylated by PPP1CC at the onset of anaphase. Dephosphorylation by protein phosphatase 2A (PP2A) and simultaneous exposure of the positively charged patch (CP) during mitotic exit induce the RNA-dependent formation of a liquid-like condensed phase on the chromosome surface. Post-translationally, ubiquitinated by the APC/C complex after neuronal progenitors exit mitosis during brain development, leading to clearance from constitutive heterochromatin. As to expression, mainly present in proliferating cells (at protein level).

The protein resides in the chromosome. Its subcellular location is the nucleus. It localises to the nucleolus. In terms of biological role, protein that associates with the surface of mitotic chromosomes and acts both as a chromosome repellent during early mitosis and chromosome attractant during late mitosis. Required to maintain individual mitotic chromosomes dispersed in the cytoplasm following nuclear envelope disassembly. During early mitosis, relocalizes from nucleoli to the chromosome surface where it forms extended brush structures that cover a substantial fraction of the chromosome surface. The MKI67 brush structure prevents chromosomes from collapsing into a single chromatin mass by forming a steric and electrostatic charge barrier: the protein has a high net electrical charge and acts as a surfactant, dispersing chromosomes and enabling independent chromosome motility. During mitotic anaphase, the MKI67 brush structure collapses and MKI67 switches from a chromosome repellent to a chromosome attractant to promote chromosome clustering and facilitate the exclusion of large cytoplasmic particles from the future nuclear space. Mechanistically, dephosphorylation during mitotic exit and simultaneous exposure of a conserved basic patch induce the RNA-dependent formation of a liquid-like condensed phase on the chromosome surface, promoting coalescence of neighboring chromosome surfaces and clustering of chromosomes. Binds premature ribosomal RNAs during anaphase; promoting liquid-liquid phase separation. Binds DNA, with a preference for supercoiled DNA and AT-rich DNA. Does not contribute to the internal structure of mitotic chromosomes. May play a role in chromatin organization; it is however unclear whether it plays a direct role in chromatin organization or whether it is an indirect consequence of its function in mitotic chromosome. The polypeptide is Proliferation marker protein Ki-67 (Mus musculus (Mouse)).